Here is a 47-residue protein sequence, read N- to C-terminus: Lysis protein for colicin E8 (47 aa).

The N-terminal stretch at 1–19 (MKKITGIILLLLAVIILAA) is a signal peptide. Residue cysteine 20 is the site of N-palmitoyl cysteine attachment. Cysteine 20 carries the S-diacylglycerol cysteine lipid modification.

It localises to the cell outer membrane. In terms of biological role, lysis proteins are required for both colicin release and partial cell lysis. The polypeptide is Lysis protein for colicin E8 (lys) (Escherichia coli).